The chain runs to 277 residues: Diaminopimelate epimerase (277 aa).

N13, Q46, and N66 together coordinate substrate. C75 (proton donor) is an active-site residue. Residues 76–77, N159, N192, and 210–211 contribute to the substrate site; these read GN and ER. The Proton acceptor role is filled by C219. Residue 220–221 participates in substrate binding; it reads GT.

It belongs to the diaminopimelate epimerase family. Homodimer.

Its subcellular location is the cytoplasm. It carries out the reaction (2S,6S)-2,6-diaminopimelate = meso-2,6-diaminopimelate. It functions in the pathway amino-acid biosynthesis; L-lysine biosynthesis via DAP pathway; DL-2,6-diaminopimelate from LL-2,6-diaminopimelate: step 1/1. Functionally, catalyzes the stereoinversion of LL-2,6-diaminopimelate (L,L-DAP) to meso-diaminopimelate (meso-DAP), a precursor of L-lysine and an essential component of the bacterial peptidoglycan. The protein is Diaminopimelate epimerase of Azoarcus sp. (strain BH72).